A 371-amino-acid chain; its full sequence is Nicotinate-nucleotide pyrophosphorylase [carboxylating], chloroplastic (371 aa).

A chloroplast-targeting transit peptide spans 1–48 (MPAAAAAAAPPNPNVLQLAPRLRGLVSFPSSYSSSSPFSNRLRLRLPR). Substrate-binding positions include arginine 162, 193-195 (TRK), arginine 217, lysine 227, glutamate 260, aspartate 287, 319-321 (SGN), and 340-342 (SGA).

It belongs to the NadC/ModD family.

The protein localises to the plastid. The protein resides in the chloroplast. The enzyme catalyses nicotinate beta-D-ribonucleotide + CO2 + diphosphate = quinolinate + 5-phospho-alpha-D-ribose 1-diphosphate + 2 H(+). The protein operates within cofactor biosynthesis; NAD(+) biosynthesis; nicotinate D-ribonucleotide from quinolinate: step 1/1. In terms of biological role, involved in the catabolism of quinolinic acid (QA). The protein is Nicotinate-nucleotide pyrophosphorylase [carboxylating], chloroplastic of Oryza sativa subsp. japonica (Rice).